The following is a 267-amino-acid chain: Hydroxynaphthalene reductase-like protein Arp2 (267 aa).

The NADP(+) site is built by Ile25, Asn45, Asp71, and Asn98. Active-site proton donor residues include Ser147 and Ser148. The NADP(+) site is built by Tyr162, Lys166, Val195, and Thr197. Tyr162 functions as the Proton acceptor in the catalytic mechanism. The Lowers pKa of active site Tyr role is filled by Lys166.

This sequence belongs to the short-chain dehydrogenases/reductases (SDR) family.

In terms of biological role, hydroxynaphthalene reductase-like protein; part of the Pks2 gene cluster that mediates the formation of infectious structures (appressoria), enabling these fungi to kill insects faster. The product of the Pks2 gene cluster is different from the one of Pks1 and has still not been identified. The protein is Hydroxynaphthalene reductase-like protein Arp2 of Metarhizium acridum (strain CQMa 102).